The chain runs to 213 residues: Glycerol-3-phosphate acyltransferase (213 aa).

The next 6 helical transmembrane spans lie at 2–22 (ITIV…GLWI), 52–74 (AGMA…PIIF), 81–100 (PLIF…FAGF), 112–132 (VIFG…FGAL), 143–163 (VTAS…GFIL), and 164–184 (SNYD…IIIR).

Belongs to the PlsY family. In terms of assembly, probably interacts with PlsX.

It localises to the cell membrane. The enzyme catalyses an acyl phosphate + sn-glycerol 3-phosphate = a 1-acyl-sn-glycero-3-phosphate + phosphate. It functions in the pathway lipid metabolism; phospholipid metabolism. In terms of biological role, catalyzes the transfer of an acyl group from acyl-phosphate (acyl-PO(4)) to glycerol-3-phosphate (G3P) to form lysophosphatidic acid (LPA). This enzyme utilizes acyl-phosphate as fatty acyl donor, but not acyl-CoA or acyl-ACP. The polypeptide is Glycerol-3-phosphate acyltransferase (Streptococcus pneumoniae (strain Hungary19A-6)).